Consider the following 161-residue polypeptide: F-box only protein 48 (161 aa).

Residues 1-25 are disordered; the sequence is MKKTSKKNNNFKIPGTELNSADAER. The F-box domain maps to 32-79; that stretch reads RNFVELLPLEVTYKIFSQLDIQSLCRASRTCTGWNCAIRNNDSLWKPH.

The sequence is that of F-box only protein 48 (Fbxo48) from Mus musculus (Mouse).